The primary structure comprises 150 residues: Early 4 ORF6/7 control protein (150 aa).

The tract at residues 1 to 31 (MTTSGVPFGMTLRPTRSRLSRRTPYSRDRLP) is disordered. The Nuclear localization signal motif lies at 1–58 (MTTSGVPFGMTLRPTRSRLSRRTPYSRDRLPPFETETRATILEDHPLLPECNTLTMHN).

Belongs to the adenoviridae E4-orf6/7 family. As to quaternary structure, interacts with host E2F proteins.

It localises to the host nucleus. Modulates viral and host transcriptional activity to promote viral genome replication. Stimulates viral E2a promoter activity by binding and inducing dimerization of host E2F. During viral infection E1A protein binds to cellular retinablastoma (RB) family members and dissociates these repressors from a complex with E2F proteins. Free E2F is then bound to E4orf6/7 which leads to transactivation of viral E2 promoter, and cellular promoters such as E2F-1 promoter. Activation of cellular E2F targets promote cell cycle S phase and thereby possibly favorises viral DNA replication process. This is Early 4 ORF6/7 control protein from Human adenovirus C serotype 2 (HAdV-2).